Here is a 138-residue protein sequence, read N- to C-terminus: Putative pre-16S rRNA nuclease (138 aa).

This sequence belongs to the YqgF nuclease family.

The protein localises to the cytoplasm. In terms of biological role, could be a nuclease involved in processing of the 5'-end of pre-16S rRNA. This Citrobacter koseri (strain ATCC BAA-895 / CDC 4225-83 / SGSC4696) protein is Putative pre-16S rRNA nuclease.